Consider the following 377-residue polypeptide: MIRKIIYVTGTRADYGLMREVLKRLHQSEDIDLSICVTGMHLDALYGNTVNEIKADQFSICGIIPVDLANAQHSSMAKAIGHELLGFTEVFESETPDVVLLLGDRGEMLAAAIAAIHLNIPVVHLHGGERSGTVDEMVRHAISKLSHYHFVATEASKQRLIRMGEKEETIFQVGAPGLDEIMQYKTSTRDVFNQRYGFDPDKKICLLIYHPVVQEVDSIKIQFQSVIQAALATNLQIICLEPNSDTGGHLIREVIQEYIDHPDVRIIKHLHRPEFIDCLANSDVMLGNSSSGIIEAASFNLNVVNVGSRQNLRERSDNVIDVDVTYDAILTGLREALNKPKIKYSNCYGDGKTSERCYQLLKTIPLHSQILNKCNAY.

This sequence belongs to the UDP-N-acetylglucosamine 2-epimerase family.

The catalysed reaction is UDP-N,N'-diacetylbacillosamine + H2O = 2,4-diacetamido-2,4,6-trideoxy-alpha-D-mannopyranose + UDP + H(+). Functionally, involved in biosynthesis of legionaminic acid (5,7-diamino-3,5,7,9-tetradeoxy-D-glycero-D-galacto-non-2-ulosonic acid)(Leg), a sialic acid-like derivative that is incorporated into virulence-associated cell surface glycoconjugates such as lipopolysaccharide (LPS) which could be a key determinant in the ability of L.pneumophila to inhibit the fusion of phagosomes with lysosomes. LPS contains a majority alpha2,4-linked homomer of legionaminic acid. Catalyzes the conversion of UDP-N,N'-diacetylbacillosamine (Bac2Ac4Ac) into 2,4-diacetamido-2,4,6-trideoxymannose and UDP. This chain is UDP-N,N'-diacetylbacillosamine 2-epimerase (hydrolyzing), found in Legionella pneumophila subsp. pneumophila (strain Philadelphia 1 / ATCC 33152 / DSM 7513).